The primary structure comprises 255 residues: Imidazole glycerol phosphate synthase subunit HisF (255 aa).

Residues Asp12 and Asp131 contribute to the active site.

It belongs to the HisA/HisF family. Heterodimer of HisH and HisF.

The protein localises to the cytoplasm. It catalyses the reaction 5-[(5-phospho-1-deoxy-D-ribulos-1-ylimino)methylamino]-1-(5-phospho-beta-D-ribosyl)imidazole-4-carboxamide + L-glutamine = D-erythro-1-(imidazol-4-yl)glycerol 3-phosphate + 5-amino-1-(5-phospho-beta-D-ribosyl)imidazole-4-carboxamide + L-glutamate + H(+). It participates in amino-acid biosynthesis; L-histidine biosynthesis; L-histidine from 5-phospho-alpha-D-ribose 1-diphosphate: step 5/9. In terms of biological role, IGPS catalyzes the conversion of PRFAR and glutamine to IGP, AICAR and glutamate. The HisF subunit catalyzes the cyclization activity that produces IGP and AICAR from PRFAR using the ammonia provided by the HisH subunit. The sequence is that of Imidazole glycerol phosphate synthase subunit HisF from Neisseria meningitidis serogroup C (strain 053442).